We begin with the raw amino-acid sequence, 492 residues long: ATP synthase subunit beta, chloroplastic (492 aa).

170-177 is an ATP binding site; it reads GGAGVGKT.

It belongs to the ATPase alpha/beta chains family. In terms of assembly, F-type ATPases have 2 components, CF(1) - the catalytic core - and CF(0) - the membrane proton channel. CF(1) has five subunits: alpha(3), beta(3), gamma(1), delta(1), epsilon(1). CF(0) has four main subunits: a(1), b(1), b'(1) and c(9-12).

The protein resides in the plastid. It is found in the chloroplast thylakoid membrane. The enzyme catalyses ATP + H2O + 4 H(+)(in) = ADP + phosphate + 5 H(+)(out). Produces ATP from ADP in the presence of a proton gradient across the membrane. The catalytic sites are hosted primarily by the beta subunits. This Angiopteris lygodiifolia (Turnip fern) protein is ATP synthase subunit beta, chloroplastic.